We begin with the raw amino-acid sequence, 843 residues long: Vacuolar membrane protease (843 aa).

Residues methionine 1–alanine 16 are Cytoplasmic-facing. A helical transmembrane segment spans residues phenylalanine 17–leucine 37. Residues aspartate 38–asparagine 347 lie on the Vacuolar side of the membrane. 3 N-linked (GlcNAc...) asparagine glycosylation sites follow: asparagine 96, asparagine 109, and asparagine 117. Zn(2+)-binding residues include histidine 147 and aspartate 159. Glutamate 191 serves as the catalytic Proton acceptor. Residue glutamate 192 participates in Zn(2+) binding. Residue asparagine 209 is glycosylated (N-linked (GlcNAc...) asparagine). Glutamate 217 lines the Zn(2+) pocket. Asparagine 275 is a glycosylation site (N-linked (GlcNAc...) asparagine). Zn(2+) is bound at residue histidine 292. Asparagine 322 carries N-linked (GlcNAc...) asparagine glycosylation. A helical transmembrane segment spans residues leucine 348–leucine 368. Over threonine 369 to threonine 386 the chain is Cytoplasmic. The helical transmembrane segment at valine 387–leucine 407 threads the bilayer. Topologically, residues threonine 408 to serine 417 are vacuolar. A helical membrane pass occupies residues histidine 418–phenylalanine 438. Residues arginine 439–glutamate 456 are Cytoplasmic-facing. A helical transmembrane segment spans residues isoleucine 457–leucine 477. Topologically, residues serine 478 to glycine 484 are vacuolar. The chain crosses the membrane as a helical span at residues serine 485–isoleucine 505. The Cytoplasmic segment spans residues arginine 506 to asparagine 566. Residues isoleucine 567 to isoleucine 587 traverse the membrane as a helical segment. Residues leucine 588–lysine 608 are Vacuolar-facing. Residues leucine 609 to phenylalanine 629 form a helical membrane-spanning segment. The Cytoplasmic segment spans residues arginine 630–serine 636. A helical membrane pass occupies residues leucine 637–phenylalanine 657. At threonine 658 to isoleucine 843 the chain is on the vacuolar side. N-linked (GlcNAc...) asparagine glycans are attached at residues asparagine 677, asparagine 703, asparagine 707, asparagine 754, and asparagine 788.

The protein belongs to the peptidase M28 family. Zn(2+) serves as cofactor.

The protein localises to the membrane. It localises to the vacuole membrane. Its function is as follows. May be involved in vacuolar sorting and osmoregulation. This chain is Vacuolar membrane protease, found in Schizosaccharomyces pombe (strain 972 / ATCC 24843) (Fission yeast).